A 197-amino-acid chain; its full sequence is Putative RNA polymerase II subunit B1 CTD phosphatase rtr1 (197 aa).

The segment at 60-139 adopts an RTR1-type zinc-finger fold; sequence EARKYLRKSD…LSDEPLWIRE (80 aa). Residues cysteine 83, cysteine 88, cysteine 115, and cysteine 119 each contribute to the Zn(2+) site.

Belongs to the RPAP2 family.

It is found in the cytoplasm. The protein localises to the nucleus. It catalyses the reaction O-phospho-L-seryl-[protein] + H2O = L-seryl-[protein] + phosphate. It carries out the reaction O-phospho-L-threonyl-[protein] + H2O = L-threonyl-[protein] + phosphate. In terms of biological role, putative RNA polymerase II subunit B1 C-terminal domain (CTD) phosphatase involved in RNA polymerase II transcription regulation. The chain is Putative RNA polymerase II subunit B1 CTD phosphatase rtr1 from Schizosaccharomyces pombe (strain 972 / ATCC 24843) (Fission yeast).